The following is a 229-amino-acid chain: Acetylornithine aminotransferase (229 aa).

Pyridoxal 5'-phosphate is bound by residues 95 to 96 (GA) and phenylalanine 122. Residue arginine 125 coordinates N(2)-acetyl-L-ornithine. Residue 208–211 (DEIQ) coordinates pyridoxal 5'-phosphate.

Belongs to the class-III pyridoxal-phosphate-dependent aminotransferase family. ArgD subfamily. As to quaternary structure, homodimer. Pyridoxal 5'-phosphate is required as a cofactor.

The protein localises to the cytoplasm. The enzyme catalyses N(2)-acetyl-L-ornithine + 2-oxoglutarate = N-acetyl-L-glutamate 5-semialdehyde + L-glutamate. The protein operates within amino-acid biosynthesis; L-arginine biosynthesis; N(2)-acetyl-L-ornithine from L-glutamate: step 4/4. This is Acetylornithine aminotransferase (argD) from Bacillus amyloliquefaciens (Bacillus velezensis).